Here is a 1935-residue protein sequence, read N- to C-terminus: Myosin-7 (1935 aa).

Residues 32–81 enclose the Myosin N-terminal SH3-like domain; it reads DLKKDVFVPDDKQEFVKAKIVSREGGKVTAETEYGKTVTVKEDQVMQQNP. The region spanning 85–778 is the Myosin motor domain; sequence DKIEDMAMLT…LLGLLEEMRD (694 aa). Residue K129 is modified to N6,N6,N6-trimethyllysine. 178–185 is an ATP binding site; sequence GESGAGKT. T378 carries the phosphothreonine modification. Actin-binding stretches follow at residues 655–677 and 757–771; these read LNKL…IPNE and KFGH…GLLG. The region spanning 781 to 810 is the IQ domain; that stretch reads LSRIITRIQAQSRGVLARMEYKKLLERRDS. Residues 839–1935 are a coiled coil; the sequence is LLKSAEREKE…DIGTKGLNEE (1097 aa). Phosphoserine is present on residues S1137 and S1269. The residue at position 1282 (T1282) is a Phosphothreonine. Residue Y1308 is modified to Phosphotyrosine. The residue at position 1309 (T1309) is a Phosphothreonine. The residue at position 1510 (S1510) is a Phosphoserine. At T1513 the chain carries Phosphothreonine. Residues 1907–1935 are disordered; the sequence is EERADIAESQVNKLRAKSRDIGTKGLNEE. The span at 1923-1935 shows a compositional bias: basic and acidic residues; that stretch reads KSRDIGTKGLNEE.

The protein belongs to the TRAFAC class myosin-kinesin ATPase superfamily. Myosin family. As to quaternary structure, muscle myosin is a hexameric protein that consists of 2 heavy chain subunits (MHC), 2 alkali light chain subunits (MLC) and 2 regulatory light chain subunits (MLC-2). Interacts with ECPAS. Interacts (via C-terminus) with LRRC39. Both wild type and variant Gln-403 are detected in skeletal muscle (at protein level).

The protein localises to the cytoplasm. It localises to the myofibril. It is found in the sarcomere. Myosins are actin-based motor molecules with ATPase activity essential for muscle contraction. Forms regular bipolar thick filaments that, together with actin thin filaments, constitute the fundamental contractile unit of skeletal and cardiac muscle. This is Myosin-7 (MYH7) from Homo sapiens (Human).